Reading from the N-terminus, the 183-residue chain is Non-classical export protein 2 homolog (183 aa).

Topologically, residues 1–8 (MVGIRQYG) are cytoplasmic. The chain crosses the membrane as a helical span at residues 9 to 29 (VFTWVFRTFQLAIDTIVLALA). Over 30–44 (SALVNQQTSGGSPGK) the chain is Extracellular. A helical membrane pass occupies residues 45–65 (INFSVAVGSFAILTFFLTAVG). The Cytoplasmic portion of the chain corresponds to 66–75 (RFLPTILGNP). A helical membrane pass occupies residues 76–96 (WLIAFYDFVNWVFALTGGCCI). Over 97–131 (AVAIRVHACDNQKYLDRNHYTQGSMRRCQELKALC) the chain is Extracellular. Residues 132–152 (FFLWFMFGLYVASFIVQIFIA) traverse the membrane as a helical segment. The Cytoplasmic portion of the chain corresponds to 153–183 (KNDTPNYTFRGRGRGKGSGPAVAPRPVMSAV). Residues 163–183 (GRGRGKGSGPAVAPRPVMSAV) are disordered.

This sequence belongs to the NCE102 family.

The protein resides in the cytoplasm. Its subcellular location is the golgi apparatus membrane. It is found in the cell membrane. Its function is as follows. Involved in membrane organization and might act as a sensor of sphingolipids that regulates plasma membrane function. Involved in a novel pathway of export of proteins that lack a cleavable signal sequence. The sequence is that of Non-classical export protein 2 homolog (fhn1) from Schizosaccharomyces pombe (strain 972 / ATCC 24843) (Fission yeast).